Reading from the N-terminus, the 342-residue chain is tRNA N6-adenosine threonylcarbamoyltransferase (342 aa).

Positions 115 and 119 each coordinate Fe cation. Substrate-binding positions include I138–G142, D171, G184, D188, and N276. Position 304 (D304) interacts with Fe cation.

Belongs to the KAE1 / TsaD family. It depends on Fe(2+) as a cofactor.

The protein localises to the cytoplasm. The enzyme catalyses L-threonylcarbamoyladenylate + adenosine(37) in tRNA = N(6)-L-threonylcarbamoyladenosine(37) in tRNA + AMP + H(+). Functionally, required for the formation of a threonylcarbamoyl group on adenosine at position 37 (t(6)A37) in tRNAs that read codons beginning with adenine. Is involved in the transfer of the threonylcarbamoyl moiety of threonylcarbamoyl-AMP (TC-AMP) to the N6 group of A37, together with TsaE and TsaB. TsaD likely plays a direct catalytic role in this reaction. The chain is tRNA N6-adenosine threonylcarbamoyltransferase from Endomicrobium trichonymphae.